A 204-amino-acid polypeptide reads, in one-letter code: THO complex subunit 7 homolog (204 aa).

Gly2 carries the N-acetylglycine modification. Thr5 bears the Phosphothreonine mark. Lys36 carries the post-translational modification N6-acetyllysine. The interaction with THOC5 stretch occupies residues 50-137 (YQRMLSTLSQ…HHPDRHETLK (88 aa)). The segment at 105–204 (QILQAKRIRK…ESTMEADPKP (100 aa)) is interaction with NIF3L1. Positions 146 to 204 (LEHLSHIKESVEDKLELRRKQFHVLLSTIHELQQTLENDDKLSEVDEAQESTMEADPKP) form a coiled coil. Positions 182–204 (ENDDKLSEVDEAQESTMEADPKP) are disordered.

This sequence belongs to the THOC7 family. In terms of assembly, tetramer; as part of a THO-DDX39B complex. Component of the THO subcomplex, which is composed of THOC1, THOC2, THOC3, THOC5, THOC6 and THOC7. Component of the transcription/export (TREX) complex at least composed of ALYREF/THOC4, DDX39B, SARNP/CIP29, CHTOP and the THO subcomplex; in the complex interacts with THOC1, THOC2 and THOC5; forms a coiled-coil dimer with THOC5; together with THOC5 and THOC6, plays a key structural role in the oligomerization of the THO-DDX39B complex. TREX seems to have a dynamic structure involving ATP-dependent remodeling. Interacts with NIF3L1. Ubiquitously expressed.

It localises to the cytoplasm. Its subcellular location is the nucleus. The protein localises to the nucleus speckle. Functionally, component of the THO subcomplex of the TREX complex which is thought to couple mRNA transcription, processing and nuclear export, and which specifically associates with spliced mRNA and not with unspliced pre-mRNA. Required for efficient export of polyadenylated RNA. Plays a key structural role in the oligomerization of the THO-DDX39B complex. TREX is recruited to spliced mRNAs by a transcription-independent mechanism, binds to mRNA upstream of the exon-junction complex (EJC) and is recruited in a splicing- and cap-dependent manner to a region near the 5' end of the mRNA where it functions in mRNA export to the cytoplasm via the TAP/NXF1 pathway. This chain is THO complex subunit 7 homolog (Thoc7), found in Mus musculus (Mouse).